Reading from the N-terminus, the 346-residue chain is Methylthioribose-1-phosphate isomerase (346 aa).

Substrate is bound by residues 50 to 52 (RGA), Arg93, and Gln196. Asp237 (proton donor) is an active-site residue. 247–248 (NK) is a binding site for substrate.

The protein belongs to the eIF-2B alpha/beta/delta subunits family. MtnA subfamily.

The enzyme catalyses 5-(methylsulfanyl)-alpha-D-ribose 1-phosphate = 5-(methylsulfanyl)-D-ribulose 1-phosphate. It functions in the pathway amino-acid biosynthesis; L-methionine biosynthesis via salvage pathway; L-methionine from S-methyl-5-thio-alpha-D-ribose 1-phosphate: step 1/6. Functionally, catalyzes the interconversion of methylthioribose-1-phosphate (MTR-1-P) into methylthioribulose-1-phosphate (MTRu-1-P). In Alkalilimnicola ehrlichii (strain ATCC BAA-1101 / DSM 17681 / MLHE-1), this protein is Methylthioribose-1-phosphate isomerase.